Reading from the N-terminus, the 487-residue chain is Berbamunine synthase (487 aa).

Position 429 (cysteine 429) interacts with heme.

Belongs to the cytochrome P450 family. Requires heme as cofactor.

Its subcellular location is the endoplasmic reticulum membrane. It localises to the microsome membrane. The enzyme catalyses (R)-N-methylcoclaurine + (S)-N-methylcoclaurine + reduced [NADPH--hemoprotein reductase] + O2 = berbamunine + oxidized [NADPH--hemoprotein reductase] + 2 H2O + H(+). It functions in the pathway alkaloid biosynthesis; berbamunine biosynthesis; berbamunine from (R)-N-methylcoclaurine and (S)-N-methylcoclaurine: step 1/1. Its function is as follows. Forms the bisbenzylisoquinoline alkaloid berbamunine by phenol oxidation of N-methylcoclaurine without the incorporation of oxygen into the product. Oxidatively couples either two molecules of (R)-N-methylcoclaurine to form the (R,R) dimer guattegaumerine or one molecule each of (R)- and (S)-N-methylcoclaurine to form the (R,S) dimer berbamunine. The sequence is that of Berbamunine synthase (CYP80A1) from Berberis stolonifera (Barberry).